Consider the following 755-residue polypeptide: Tryptophan 2-monooxygenase (755 aa).

FMN-binding residues include S247, E267, K275, and R295. Substrate is bound at residue R295.

The protein belongs to the tryptophan 2-monooxygenase family. FMN is required as a cofactor.

It catalyses the reaction L-tryptophan + O2 = indole-3-acetamide + CO2 + H2O. Its pathway is plant hormone metabolism; auxin biosynthesis. The polypeptide is Tryptophan 2-monooxygenase (tms1) (Agrobacterium tumefaciens (strain Ach5)).